A 426-amino-acid chain; its full sequence is Enolase 1 (426 aa).

Gln-162 is a (2R)-2-phosphoglycerate binding site. Residue Glu-204 is the Proton donor of the active site. 3 residues coordinate Mg(2+): Asp-241, Glu-284, and Asp-311. (2R)-2-phosphoglycerate contacts are provided by Lys-336, Arg-365, Ser-366, and Lys-387. The active-site Proton acceptor is Lys-336.

This sequence belongs to the enolase family. The cofactor is Mg(2+).

It is found in the cytoplasm. Its subcellular location is the secreted. The protein localises to the cell surface. It catalyses the reaction (2R)-2-phosphoglycerate = phosphoenolpyruvate + H2O. It functions in the pathway carbohydrate degradation; glycolysis; pyruvate from D-glyceraldehyde 3-phosphate: step 4/5. Functionally, catalyzes the reversible conversion of 2-phosphoglycerate (2-PG) into phosphoenolpyruvate (PEP). It is essential for the degradation of carbohydrates via glycolysis. The chain is Enolase 1 from Methanospirillum hungatei JF-1 (strain ATCC 27890 / DSM 864 / NBRC 100397 / JF-1).